The sequence spans 346 residues: Probable dual-specificity RNA methyltransferase RlmN (346 aa).

The active-site Proton acceptor is Glu-90. The Radical SAM core domain occupies Thr-96 to Asp-330. A disulfide bridge connects residues Cys-103 and Cys-335. [4Fe-4S] cluster contacts are provided by Cys-110, Cys-114, and Cys-117. S-adenosyl-L-methionine contacts are provided by residues Gly-157–Glu-158, Ser-187, Ser-216–His-218, and Asn-292. Catalysis depends on Cys-335, which acts as the S-methylcysteine intermediate.

Belongs to the radical SAM superfamily. RlmN family. It depends on [4Fe-4S] cluster as a cofactor.

The protein localises to the cytoplasm. The enzyme catalyses adenosine(2503) in 23S rRNA + 2 reduced [2Fe-2S]-[ferredoxin] + 2 S-adenosyl-L-methionine = 2-methyladenosine(2503) in 23S rRNA + 5'-deoxyadenosine + L-methionine + 2 oxidized [2Fe-2S]-[ferredoxin] + S-adenosyl-L-homocysteine. It carries out the reaction adenosine(37) in tRNA + 2 reduced [2Fe-2S]-[ferredoxin] + 2 S-adenosyl-L-methionine = 2-methyladenosine(37) in tRNA + 5'-deoxyadenosine + L-methionine + 2 oxidized [2Fe-2S]-[ferredoxin] + S-adenosyl-L-homocysteine. Its function is as follows. Specifically methylates position 2 of adenine 2503 in 23S rRNA and position 2 of adenine 37 in tRNAs. This chain is Probable dual-specificity RNA methyltransferase RlmN, found in Synechococcus sp. (strain RCC307).